Reading from the N-terminus, the 315-residue chain is Probable cell division protein WhiA (315 aa).

The H-T-H motif DNA-binding region spans 280–313 (SLRELGKMLNPPVGKSGVNHRLRRIEKIADELKQ).

Belongs to the WhiA family.

Involved in cell division and chromosome segregation. In Clostridium botulinum (strain ATCC 19397 / Type A), this protein is Probable cell division protein WhiA.